The following is a 632-amino-acid chain: MTQQTMSFQAEVKQLLHLMIHSLYSNKEIFLRELVSNASDAADKLRFEALENNALYESDPNLRIRLSFDKAARTITIDDNGIGMSRDEAIANLGTIARSGTKEFFSKLSGDQQKDAALIGQFGVGFYSGFIVADRITVETRRAGLPASEGVRWESAGEGDFQVDTIERAARGTTITLHLREGEDELLSSYRLKSIVQKYSDHVALPILMKKEEWDQEKGEMVEKDEDETINQASALWTRAKSEVTDEQYKQFYQHVAHDHQDPLAWTHNRVEGRSEYTQLLFVPSHAPFDLWNRDYRGGLKLYVKRVFIMDDAEQLLPQYLRFIKGVVDSSDLPLNVSREILQESRDVKAIREGVTKRALSMLEELANAEDDAGKEKYKTFWSAFGQVLKEGVGEDHANRERVAKLLRFASTHGDTDAQDVALADYVARMKPEQTKIYYVTADTWQAAKNSPHLEVFRKKGVEVLLLTDRVDEWMLSFLHEFDGKPLASVARGDLDLGALNDDEKKAQEETGEAMKPVVDKMKETLGEKVKDVRVTFRLTDSPSCLVADDNDMSGYLQRMLKAAGQSAPSFQPILEINPEHPLVKALKADGADFGDWCHLLFDQALLAEGGALEDPASFVKRTNALLLSRAA.

Residues 1 to 339 (MTQQTMSFQA…SSDLPLNVSR (339 aa)) form an a; substrate-binding region. The b stretch occupies residues 340 to 559 (EILQESRDVK…DNDMSGYLQR (220 aa)). Positions 560–632 (MLKAAGQSAP…TNALLLSRAA (73 aa)) are c.

This sequence belongs to the heat shock protein 90 family. Homodimer.

It localises to the cytoplasm. In terms of biological role, molecular chaperone. Has ATPase activity. The chain is Chaperone protein HtpG from Burkholderia mallei (strain NCTC 10247).